Reading from the N-terminus, the 314-residue chain is tRNA dimethylallyltransferase (314 aa).

12-19 lines the ATP pocket; sequence GPTAAGKS. 14–19 is a substrate binding site; the sequence is TAAGKS. 3 interaction with substrate tRNA regions span residues 37–40, 161–165, and 245–250; these read DSAT, QRIQR, and RCVGYR.

It belongs to the IPP transferase family. Monomer. The cofactor is Mg(2+).

The catalysed reaction is adenosine(37) in tRNA + dimethylallyl diphosphate = N(6)-dimethylallyladenosine(37) in tRNA + diphosphate. Its function is as follows. Catalyzes the transfer of a dimethylallyl group onto the adenine at position 37 in tRNAs that read codons beginning with uridine, leading to the formation of N6-(dimethylallyl)adenosine (i(6)A). The polypeptide is tRNA dimethylallyltransferase (Bordetella petrii (strain ATCC BAA-461 / DSM 12804 / CCUG 43448)).